Consider the following 348-residue polypeptide: High mobility group protein 20A (348 aa).

Disordered regions lie at residues 1–114 (MENL…YVRF) and 181–213 (SRKA…DTKE). Polar residues-rich tracts occupy residues 34–47 (SESS…QPVN) and 56–71 (SQVQ…TAEN). Positions 72–82 (TEQKPEEEQQR) are enriched in basic and acidic residues. A compositionally biased stretch (basic residues) spans 83 to 97 (TKRGGWAKGRKRKKP). The HMG box DNA-binding region spans 104–172 (PKSPLTGYVR…RYMRELEQYQ (69 aa)). The span at 183 to 213 (KAQDRQKGKLHRQDGARQPVHDHEKEADTKE) shows a compositional bias: basic and acidic residues. Residues 230–274 (SKAREAELRQLRKSNMEFEERNAALQKHVESMRTAVEKLEVDVIQ) are a coiled coil.

Its subcellular location is the nucleus. Functionally, plays a role in neuronal differentiation. In Gallus gallus (Chicken), this protein is High mobility group protein 20A (HMG20A).